We begin with the raw amino-acid sequence, 388 residues long: Probable proton-coupled zinc antiporter SLC30A3 (388 aa).

Residues 1-13 (MEPSPTTGGSETT) are compositionally biased toward polar residues. Disordered stretches follow at residues 1–30 (MEPS…GLRL) and 35–54 (TEAP…SFHH). The Cytoplasmic portion of the chain corresponds to 1–75 (MEPSPTTGGS…TPERMQAQRQ (75 aa)). Residues 76–96 (LCTACAVCCVFMAGEVVGGYL) traverse the membrane as a helical segment. Residues 97 to 105 (AHSLAIMTD) lie on the Lumenal side of the membrane. Residues 106–126 (AAHLLADVGSMMGSLFSLWLS) traverse the membrane as a helical segment. His-108 and Asp-112 together coordinate Zn(2+). Over 127 to 145 (TRPATRTMTFGWHRSETLG) the chain is Cytoplasmic. The helical transmembrane segment at 146 to 166 (ALASVVSLWMVTGILLYLAFI) threads the bilayer. Residues 167–177 (RLLHSDYHIEG) are Lumenal-facing. A helical transmembrane segment spans residues 178-198 (GAMLLTASIAVCANLLMAFVL). Topologically, residues 199–235 (HQAGPPHSHGSRGAEYAPLEEGSGEPLPLGNTSVRAA) are cytoplasmic. The chain crosses the membrane as a helical span at residues 236–256 (FVHVLGDLLQSLGVLIASILI). Zn(2+) is bound by residues His-238 and Asp-242. Residues 257 to 264 (YFKPQYKA) are Lumenal-facing. Residues 265–285 (ADPISTFLFSICALGSTAPTL) traverse the membrane as a helical segment. The Cytoplasmic segment spans residues 286–388 (RDVLRVLMEG…CLRCQEPPQA (103 aa)).

Belongs to the cation diffusion facilitator (CDF) transporter (TC 2.A.4) family. SLC30A subfamily. As to quaternary structure, homodimer. Homodimerization could regulate efficiency of zinc transport. Interacts with TMEM163.

It is found in the cytoplasmic vesicle. The protein localises to the secretory vesicle. Its subcellular location is the synaptic vesicle membrane. It localises to the synapse. The protein resides in the synaptosome. It is found in the late endosome membrane. The protein localises to the lysosome membrane. It carries out the reaction Zn(2+)(in) + 2 H(+)(out) = Zn(2+)(out) + 2 H(+)(in). Probable proton-coupled zinc ion antiporter mediating the import of zinc from cytoplasm into synaptic vesicles and participating to cellular zinc ion homeostasis in the brain. In Bos taurus (Bovine), this protein is Probable proton-coupled zinc antiporter SLC30A3.